Here is a 667-residue protein sequence, read N- to C-terminus: Probable oxidoreductase YyaE (667 aa).

One can recognise a 4Fe-4S Mo/W bis-MGD-type domain in the interval 2-59; it reads SKVHQSACPLNCWDSCGFLVTVDDGKVTKVDGDPNHPITEGKICGRGRMLETKTNSPD. Positions 9, 13, 17, and 45 each coordinate [4Fe-4S] cluster.

Belongs to the prokaryotic molybdopterin-containing oxidoreductase family. Mo-bis(molybdopterin guanine dinucleotide) serves as cofactor.

The sequence is that of Probable oxidoreductase YyaE (yyaE) from Bacillus subtilis (strain 168).